Reading from the N-terminus, the 278-residue chain is Energy-coupling factor transporter ATP-binding protein EcfA1 (278 aa).

The ABC transporter domain occupies 5-239; it reads IRVQHLNYTY…GMELLRLGLD (235 aa). 39-46 provides a ligand contact to ATP; sequence GHNGSGKS. The active-site Proton acceptor is the Glu-165.

It belongs to the ABC transporter superfamily. Energy-coupling factor EcfA family. As to quaternary structure, forms a stable energy-coupling factor (ECF) transporter complex probably composed of 2 membrane-embedded substrate-binding proteins (S component), 2 ATP-binding proteins (A component) and 2 transmembrane proteins (T component). This complex interacts with a number of substrate-specific components, including FolT and ThiT for 5-formyltetrahydrofolate and thiamine respectively.

Its subcellular location is the cell membrane. Functionally, ATP-binding (A) component of a common energy-coupling factor (ECF) ABC-transporter complex. Unlike classic ABC transporters this ECF transporter provides the energy necessary to transport a number of different substrates including 5-formyltetrahydrofolate and thiamine. Expression of the complex plus FolT or ThiT in Lactococcus lactis subsp. cremoris (strain NZ9000) allows 5-formyltetrahydrofolate or thiamine uptake respectively; 5-formyltetrahydrofolate or thiamine are not taken up in the absence of FolT/ThiT or the EcfA1A2T complex. Deenergized L.lactis subsp. cremoris (treated with 2-deoxyglucose) does not take up substrate. This is Energy-coupling factor transporter ATP-binding protein EcfA1 from Lacticaseibacillus paracasei (strain ATCC 334 / BCRC 17002 / CCUG 31169 / CIP 107868 / KCTC 3260 / NRRL B-441) (Lactobacillus paracasei).